Consider the following 354-residue polypeptide: DNA polymerase IV (354 aa).

Residues I8–G189 enclose the UmuC domain. Mg(2+)-binding residues include D12 and D107. The active site involves E108.

The protein belongs to the DNA polymerase type-Y family. Monomer. Mg(2+) serves as cofactor.

It localises to the cytoplasm. The enzyme catalyses DNA(n) + a 2'-deoxyribonucleoside 5'-triphosphate = DNA(n+1) + diphosphate. Functionally, poorly processive, error-prone DNA polymerase involved in untargeted mutagenesis. Copies undamaged DNA at stalled replication forks, which arise in vivo from mismatched or misaligned primer ends. These misaligned primers can be extended by PolIV. Exhibits no 3'-5' exonuclease (proofreading) activity. May be involved in translesional synthesis, in conjunction with the beta clamp from PolIII. This Vibrio vulnificus (strain CMCP6) protein is DNA polymerase IV.